Consider the following 89-residue polypeptide: Small ribosomal subunit protein uS15 (89 aa).

Belongs to the universal ribosomal protein uS15 family. In terms of assembly, part of the 30S ribosomal subunit. Forms a bridge to the 50S subunit in the 70S ribosome, contacting the 23S rRNA.

Functionally, one of the primary rRNA binding proteins, it binds directly to 16S rRNA where it helps nucleate assembly of the platform of the 30S subunit by binding and bridging several RNA helices of the 16S rRNA. Forms an intersubunit bridge (bridge B4) with the 23S rRNA of the 50S subunit in the ribosome. In Agrobacterium fabrum (strain C58 / ATCC 33970) (Agrobacterium tumefaciens (strain C58)), this protein is Small ribosomal subunit protein uS15.